The following is a 366-amino-acid chain: MTPEHLPIDQYDAQLAEKTERLQSMMAPFAAPAPEVFRSPVSHYRMRAEFRLWHDGDDLYHIIFDQETRSRIRVDSFPAASELINALMPRMIAGIRDNRTLRHKLFQIDYLTTRSQQAVVSLLYHRALDDAWREEATRLRDALRADGFDVHFIGRATKTKIMLDQDYIDERLPVAGTEMIYRQVENSFTQPNAAMNIHMLEWALDVTQGSKGDLLELYCGNGNFSLALARNFNRVLATEIAKPSVAAAQYNIAANHIDNVQIIRMAAEEFTQAMNGVREFNRLQGIDLKSYQCETIFVDPPRSGLDQETVKMVQAYPHILYISCNPQTLCENLDTLSQTHRVERLALFDQFPYTHHMECGVLLTRR.

Residues Gln-190, Tyr-218, Asn-223, Glu-239, and Asp-299 each contribute to the S-adenosyl-L-methionine site. Cys-324 serves as the catalytic Nucleophile. Glu-358 functions as the Proton acceptor in the catalytic mechanism.

This sequence belongs to the class I-like SAM-binding methyltransferase superfamily. RNA M5U methyltransferase family. TrmA subfamily.

It catalyses the reaction uridine(54) in tRNA + S-adenosyl-L-methionine = 5-methyluridine(54) in tRNA + S-adenosyl-L-homocysteine + H(+). The catalysed reaction is uridine(341) in tmRNA + S-adenosyl-L-methionine = 5-methyluridine(341) in tmRNA + S-adenosyl-L-homocysteine + H(+). Its function is as follows. Dual-specificity methyltransferase that catalyzes the formation of 5-methyluridine at position 54 (m5U54) in all tRNAs, and that of position 341 (m5U341) in tmRNA (transfer-mRNA). The sequence is that of tRNA/tmRNA (uracil-C(5))-methyltransferase from Cronobacter sakazakii (strain ATCC BAA-894) (Enterobacter sakazakii).